The following is a 317-amino-acid chain: Aspartate carbamoyltransferase catalytic subunit (317 aa).

Positions 64 and 65 each coordinate carbamoyl phosphate. Lysine 92 contributes to the L-aspartate binding site. 3 residues coordinate carbamoyl phosphate: arginine 114, histidine 142, and glutamine 145. Positions 176 and 230 each coordinate L-aspartate. Residues glycine 271 and proline 272 each coordinate carbamoyl phosphate.

Belongs to the aspartate/ornithine carbamoyltransferase superfamily. ATCase family. As to quaternary structure, heterododecamer (2C3:3R2) of six catalytic PyrB chains organized as two trimers (C3), and six regulatory PyrI chains organized as three dimers (R2).

It carries out the reaction carbamoyl phosphate + L-aspartate = N-carbamoyl-L-aspartate + phosphate + H(+). Its pathway is pyrimidine metabolism; UMP biosynthesis via de novo pathway; (S)-dihydroorotate from bicarbonate: step 2/3. Catalyzes the condensation of carbamoyl phosphate and aspartate to form carbamoyl aspartate and inorganic phosphate, the committed step in the de novo pyrimidine nucleotide biosynthesis pathway. The protein is Aspartate carbamoyltransferase catalytic subunit of Nitratidesulfovibrio vulgaris (strain DP4) (Desulfovibrio vulgaris).